Here is a 140-residue protein sequence, read N- to C-terminus: uncharacterized protein (140 aa).

3 helical membrane passes run 42–62, 65–85, and 96–116; these read AFLFNFLPLLLLLAFLDIFAS, ASFLAAVLIKILVKSVFSALG, and RASDCLAALEFFDIFLAMLCF.

Its subcellular location is the membrane. This is an uncharacterized protein from Saccharomyces cerevisiae (strain ATCC 204508 / S288c) (Baker's yeast).